The following is a 942-amino-acid chain: VPS35 endosomal protein sorting factor-like (942 aa).

The protein belongs to the VPS35L family. In terms of assembly, component of the heterotrimeric retriever complex.

It localises to the endosome. In terms of biological role, acts as a component of the retriever complex. The retriever complex is a heterotrimeric complex related to retromer cargo-selective complex (CSC) and essential for retromer-independent retrieval and recycling of numerous cargos. The polypeptide is VPS35 endosomal protein sorting factor-like (Drosophila melanogaster (Fruit fly)).